We begin with the raw amino-acid sequence, 249 residues long: Beta-crystallin B1 (249 aa).

Residues 1–49 form a disordered region; it reads MSQPAVKASATAAVNPGPDGKGKGAPPPGPAPGSGPAQAPAQPMPAAKG. Residue S2 is modified to N-acetylserine. The tract at residues 2–55 is N-terminal arm; it reads SQPAVKASATAAVNPGPDGKGKGAPPPGPAPGSGPAQAPAQPMPAAKGDLPPGS. The segment covering 34–49 has biased composition (low complexity); that stretch reads SGPAQAPAQPMPAAKG. Beta/gamma crystallin 'Greek key' domains are found at residues 56 to 95 and 96 to 140; these read YKLV…IVTS and GPWV…RPIR. Positions 141 to 145 are connecting peptide; sequence MDAQE. Beta/gamma crystallin 'Greek key' domains follow at residues 146-187 and 188-230; these read HKLC…RVSS and GTWV…RRLR. The tract at residues 232-249 is C-terminal arm; the sequence is RQWHREGCFPVLAAEPPK.

It belongs to the beta/gamma-crystallin family. Homo/heterodimer, or complexes of higher-order. The structure of beta-crystallin oligomers seems to be stabilized through interactions between the N-terminal arms. Specific cleavages in the N-terminal arm occur during lens maturation and give rise to truncated forms, leading to impaired oligomerization and protein insolubilization.

Its function is as follows. Crystallins are the dominant structural components of the vertebrate eye lens. This chain is Beta-crystallin B1 (CRYBB1), found in Sus scrofa (Pig).